Consider the following 482-residue polypeptide: ATP synthase subunit beta (482 aa).

167–174 (GGAGVGKT) serves as a coordination point for ATP.

It belongs to the ATPase alpha/beta chains family. In terms of assembly, F-type ATPases have 2 components, CF(1) - the catalytic core - and CF(0) - the membrane proton channel. CF(1) has five subunits: alpha(3), beta(3), gamma(1), delta(1), epsilon(1). CF(0) has three main subunits: a(1), b(2) and c(9-12). The alpha and beta chains form an alternating ring which encloses part of the gamma chain. CF(1) is attached to CF(0) by a central stalk formed by the gamma and epsilon chains, while a peripheral stalk is formed by the delta and b chains.

Its subcellular location is the cell membrane. The enzyme catalyses ATP + H2O + 4 H(+)(in) = ADP + phosphate + 5 H(+)(out). Its function is as follows. Produces ATP from ADP in the presence of a proton gradient across the membrane. The catalytic sites are hosted primarily by the beta subunits. This Corynebacterium aurimucosum (strain ATCC 700975 / DSM 44827 / CIP 107346 / CN-1) (Corynebacterium nigricans) protein is ATP synthase subunit beta.